The primary structure comprises 224 residues: Non-structural protein V (224 aa).

2 disordered regions span residues 57-98 (IQYP…EPLF) and 144-172 (RTSTPVTEFKRGAGNGSPRPDNPRGGHRR). Histidine 170, cysteine 189, cysteine 193, cysteine 205, cysteine 207, cysteine 210, cysteine 214, and cysteine 217 together coordinate Zn(2+).

Belongs to the paramyxoviruses V protein family. As to quaternary structure, interacts with host IFIH1/MDA5 and DHX58/LGP2. Forms with host DDB1, CUL4A, STAT1, STAT2 and STAT3 the mumps virus V-dependent complex (VDC).

Its subcellular location is the virion. It is found in the host cytoplasm. Its function is as follows. Plays an essential role in the inhibition of host immune response. Prevents the establishment of cellular antiviral state by blocking interferon-alpha/beta (IFN-alpha/beta) production and signaling pathway. Interacts with host IFIH1/MDA5 and DHX58/LGP2 to inhibit the transduction pathway involved in the activation of IFN-beta promoter, thus protecting the virus against cell antiviral state. Blocks the type I and II interferon signaling pathways by interacting with host STAT1, STAT2 and STAT3, and mediating their ubiquitination and subsequent proteasomal degradation. The protein is Non-structural protein V of Mumps virus genotype N (strain L-Zagreb vaccine) (MuV).